The sequence spans 1122 residues: Adhesin P1 (1122 aa).

An N-terminal signal peptide occupies residues 1–26; that stretch reads MKKLIFKLSVGITPLALIGLGSFGLA. 3 disordered regions span residues 182–208, 244–273, and 541–562; these read ATGD…GGGA, DYNS…GGRT, and GALQ…SNGN. A compositionally biased stretch (gly residues) spans 195–208; it reads AGGGSSSSAAGGGA. Over residues 259-273 the composition is skewed to polar residues; that stretch reads LDSSESSESINGGRT. Residues 1001 to 1021 form a helical membrane-spanning segment; the sequence is AISIPIIIIALALALGLGIGI. Positions 1066–1122 are disordered; sequence KTPQMLQANKKDGASSPSKPSAPAAKKPAGPTKPSAPGAKPTAPAKPKAPAPTKKIE. Residues 1079–1122 are compositionally biased toward low complexity; the sequence is ASSPSKPSAPAAKKPAGPTKPSAPGAKPTAPAKPKAPAPTKKIE.

This sequence belongs to the adhesin P1 family.

The protein resides in the cell membrane. In terms of biological role, could be involved in cytadherence. The protein is Adhesin P1 (gapA) of Mycoplasmoides gallisepticum (strain R(low / passage 15 / clone 2)) (Mycoplasma gallisepticum).